Consider the following 265-residue polypeptide: Triosephosphate isomerase (265 aa).

8–10 (NWK) is a substrate binding site. His103 acts as the Electrophile in catalysis. Glu182 serves as the catalytic Proton acceptor. Substrate contacts are provided by residues Gly188, Ser226, and 247–248 (GG).

It belongs to the triosephosphate isomerase family. Homodimer.

Its subcellular location is the cytoplasm. The enzyme catalyses D-glyceraldehyde 3-phosphate = dihydroxyacetone phosphate. It functions in the pathway carbohydrate biosynthesis; gluconeogenesis. It participates in carbohydrate degradation; glycolysis; D-glyceraldehyde 3-phosphate from glycerone phosphate: step 1/1. In terms of biological role, involved in the gluconeogenesis. Catalyzes stereospecifically the conversion of dihydroxyacetone phosphate (DHAP) to D-glyceraldehyde-3-phosphate (G3P). This chain is Triosephosphate isomerase, found in Psychrobacter sp. (strain PRwf-1).